The sequence spans 259 residues: Thiazole synthase (259 aa).

The active-site Schiff-base intermediate with DXP is lysine 99. 1-deoxy-D-xylulose 5-phosphate-binding positions include glycine 160, 187–188, and 209–210; these read AG and NT.

It belongs to the ThiG family. In terms of assembly, homotetramer. Forms heterodimers with either ThiH or ThiS.

It localises to the cytoplasm. It carries out the reaction [ThiS sulfur-carrier protein]-C-terminal-Gly-aminoethanethioate + 2-iminoacetate + 1-deoxy-D-xylulose 5-phosphate = [ThiS sulfur-carrier protein]-C-terminal Gly-Gly + 2-[(2R,5Z)-2-carboxy-4-methylthiazol-5(2H)-ylidene]ethyl phosphate + 2 H2O + H(+). Its pathway is cofactor biosynthesis; thiamine diphosphate biosynthesis. Catalyzes the rearrangement of 1-deoxy-D-xylulose 5-phosphate (DXP) to produce the thiazole phosphate moiety of thiamine. Sulfur is provided by the thiocarboxylate moiety of the carrier protein ThiS. In vitro, sulfur can be provided by H(2)S. The protein is Thiazole synthase of Solibacter usitatus (strain Ellin6076).